Consider the following 473-residue polypeptide: Adenosylhomocysteinase (473 aa).

Substrate is bound by residues 58–62 (HMTIQ), D135, and E197. 198–200 (TTT) serves as a coordination point for NAD(+). K227 and D231 together coordinate substrate. Residues N232, V265, E284, N319, 340-342 (IGH), and N385 each bind NAD(+). Position 342 (H342) interacts with substrate. H392 is a substrate binding site. The NAD(+) site is built by K467 and Y471.

This sequence belongs to the adenosylhomocysteinase family. In terms of assembly, homotetramer; dimer of dimers. NAD(+) serves as cofactor.

It localises to the cytoplasm. The catalysed reaction is S-adenosyl-L-homocysteine + H2O = L-homocysteine + adenosine. Its pathway is amino-acid biosynthesis; L-homocysteine biosynthesis; L-homocysteine from S-adenosyl-L-homocysteine: step 1/1. May play a key role in the regulation of the intracellular concentration of adenosylhomocysteine, which is a strong inhibitor of SAM-dependent methyltransferases. Catalyzes the hydrolysis of S-adenosyl-L-homocysteine into L-homocysteine and adenosine. This Bradyrhizobium elkanii protein is Adenosylhomocysteinase.